We begin with the raw amino-acid sequence, 497 residues long: MIATGGVITGLAALKRQDSTRSQYHLSAQSPGPAPEKKTTKRKPRADVVVVRGKIRLYSASGFFLVLGVLILMAGIAMAVLGYWPHKDQPKAPETKMSANNTQSFGREQAGSIAQFLEQHMHSEKMKMLGPFTMGIGIFIFICANAILHENRDRETKVIHMRDMYSTVIDIHSLRIKEQKCTNGACMGPYGGDTEIRTFGLDSQFASRLAANTLMSFSGLDGDVRFSHRTSSADDDDGLMSEARGGFCLLSPTYKDRSECIFGFQDDGRWEDRRGALKKCQTRSIVSSSISAFTLPVIKLNNCVIDEPDIDSITEDLEQSRVHSRPPSMESLTVPVPDIAKAFKPPGVQLLRSNSATESASSTSSRSSLSPGSTSGRFLSPGAARKDFGSNNSIHMLSAHSKSLDLERGPTKLTVQPEQRKHPSWPRLDRSNSKGYTRLENKEDPMDRLIVPPVDVKKDYTKKEKLLMISRSHNNLSFEHDEFMSSGLKRGTSETRF.

Residues 1–61 are Cytoplasmic-facing; it reads MIATGGVITG…RGKIRLYSAS (61 aa). Residues 20-30 show a composition bias toward polar residues; the sequence is TRSQYHLSAQS. A disordered region spans residues 20–44; sequence TRSQYHLSAQSPGPAPEKKTTKRKP. A helical membrane pass occupies residues 62–82; that stretch reads GFFLVLGVLILMAGIAMAVLG. The Extracellular portion of the chain corresponds to 83 to 127; sequence YWPHKDQPKAPETKMSANNTQSFGREQAGSIAQFLEQHMHSEKMK. Asparagine 100 carries N-linked (GlcNAc...) asparagine glycosylation. The helical transmembrane segment at 128–148 threads the bilayer; that stretch reads MLGPFTMGIGIFIFICANAIL. The Cytoplasmic portion of the chain corresponds to 149 to 497; sequence HENRDRETKV…LKRGTSETRF (349 aa). Positions 353–375 are enriched in low complexity; sequence SNSATESASSTSSRSSLSPGSTS. 2 disordered regions span residues 353–385 and 400–438; these read SNSA…GAAR and HSKS…GYTR. Positions 427 to 438 are enriched in basic and acidic residues; sequence RLDRSNSKGYTR.

The protein belongs to the TMEM200 family.

The protein resides in the membrane. In Danio rerio (Zebrafish), this protein is Transmembrane protein 200A (tmem200a).